The following is a 205-amino-acid chain: Regulator of G-protein signaling 4 (205 aa).

S-palmitoyl cysteine attachment occurs at residues C2, C12, and C95. Residues 62 to 178 (SLENLINHEC…LKSRFYLDLT (117 aa)) enclose the RGS domain.

In terms of processing, either Cys-2 or Cys-12 or both are palmitoylated. Phosphorylated by cyclic GMP-dependent protein kinase.

Its function is as follows. Inhibits signal transduction by increasing the GTPase activity of G protein alpha subunits thereby driving them into their inactive GDP-bound form. Activity on G(z)-alpha is inhibited by phosphorylation of the G-protein. Activity on G(z)-alpha and G(i)-alpha-1 is inhibited by palmitoylation of the G-protein. The sequence is that of Regulator of G-protein signaling 4 (Rgs4) from Rattus norvegicus (Rat).